Here is a 1097-residue protein sequence, read N- to C-terminus: DNA polymerase catalytic subunit (1097 aa).

Positions 1069-1097 are disordered; it reads RGGDDSDGGDSEKENMDTERSSSHEAMET. Over residues 1078 to 1097 the composition is skewed to basic and acidic residues; sequence DSEKENMDTERSSSHEAMET.

This sequence belongs to the DNA polymerase type-B family.

The protein resides in the host nucleus. It carries out the reaction DNA(n) + a 2'-deoxyribonucleoside 5'-triphosphate = DNA(n+1) + diphosphate. The sequence is that of DNA polymerase catalytic subunit (UL54) from Murid herpesvirus 1 (strain Smith) (MuHV-1).